We begin with the raw amino-acid sequence, 231 residues long: PIAGSMVLAAILLKLGGYGIIRMMQILPTTKTDLFLPFMVLALWGAILANLTCLQQTDLKSLIAYSSISHMGLVVAAIIIQTPWGLSGAMALMIAHGFTSSALFCLANTTYERTHTRILILTRGLHNILPMATTWWLLTNLMNIATPPTMNFTSELLIMSALFNWCPTTIIMLGLSMLITASYSLHMFLSTQMGSALTNNQTEPTHSREHLLITLHIIPLVMVSLKPELII.

Helical transmembrane passes span 1–21 (PIAG…YGII), 34–54 (LFLP…LTCL), 63–85 (IAYS…TPWG), 89–111 (AMAL…NTTY), 118–138 (ILIL…WWLL), and 156–176 (LLIM…LGLS).

It belongs to the complex I subunit 4 family.

Its subcellular location is the mitochondrion membrane. The catalysed reaction is a ubiquinone + NADH + 5 H(+)(in) = a ubiquinol + NAD(+) + 4 H(+)(out). In terms of biological role, core subunit of the mitochondrial membrane respiratory chain NADH dehydrogenase (Complex I) that is believed to belong to the minimal assembly required for catalysis. Complex I functions in the transfer of electrons from NADH to the respiratory chain. The immediate electron acceptor for the enzyme is believed to be ubiquinone. In Ovophis okinavensis (Ryukyu Island pit viper), this protein is NADH-ubiquinone oxidoreductase chain 4 (MT-ND4).